The sequence spans 349 residues: Probable arabinogalactan endo-beta-1,4-galactanase A (349 aa).

The signal sequence occupies residues Met-1–Ala-15. The N-linked (GlcNAc...) asparagine glycan is linked to Asn-126. The active-site Proton donor is the Glu-150. The active-site Nucleophile is the Glu-261.

Belongs to the glycosyl hydrolase 53 family.

It localises to the secreted. The catalysed reaction is The enzyme specifically hydrolyzes (1-&gt;4)-beta-D-galactosidic linkages in type I arabinogalactans.. In terms of biological role, endogalactanase involved in the degradation of plant cell wall polysaccharides, and more particularly of hairy regions of pectin. The chain is Probable arabinogalactan endo-beta-1,4-galactanase A (galA) from Aspergillus terreus (strain NIH 2624 / FGSC A1156).